The primary structure comprises 122 residues: Large ribosomal subunit protein uL14 (122 aa).

This sequence belongs to the universal ribosomal protein uL14 family. In terms of assembly, part of the 50S ribosomal subunit. Forms a cluster with proteins L3 and L19. In the 70S ribosome, L14 and L19 interact and together make contacts with the 16S rRNA in bridges B5 and B8.

Binds to 23S rRNA. Forms part of two intersubunit bridges in the 70S ribosome. The chain is Large ribosomal subunit protein uL14 from Streptococcus gordonii (strain Challis / ATCC 35105 / BCRC 15272 / CH1 / DL1 / V288).